The chain runs to 37 residues: M-oxotoxin-Ot2d (37 aa).

As to expression, expressed by the venom gland.

The protein localises to the secreted. In terms of biological role, disrupts biological membranes, particularly those rich in phosphocholine. Has antimicrobial activity against Gram-negative bacterium E.coli, Gram-positive bacteria B.subtilis and S.aureus, and hemolytic activity against sheep, pig and guinea pig red blood cells. Has insecticidal activity against S.frugiperda ovarian cells by opening non-selective ion channels. Enhances the insecticidal activity of spider venom neurotoxic peptides. This Oxyopes takobius (Lynx spider) protein is M-oxotoxin-Ot2d.